A 99-amino-acid chain; its full sequence is UPF0213 protein PC1_0597 (99 aa).

The region spanning 8–83 is the GIY-YIG domain; the sequence is PQWYLYILRT…KQLSKNQKER (76 aa).

It belongs to the UPF0213 family.

The polypeptide is UPF0213 protein PC1_0597 (Pectobacterium carotovorum subsp. carotovorum (strain PC1)).